The following is a 496-amino-acid chain: Glutamate--tRNA ligase (496 aa).

Residues 12 to 22 (PSPTGTPHVGL) carry the 'HIGH' region motif. The short motif at 256–260 (KLSKR) is the 'KMSKS' region element. Lys259 provides a ligand contact to ATP.

This sequence belongs to the class-I aminoacyl-tRNA synthetase family. Glutamate--tRNA ligase type 1 subfamily. Monomer.

The protein resides in the cytoplasm. The catalysed reaction is tRNA(Glu) + L-glutamate + ATP = L-glutamyl-tRNA(Glu) + AMP + diphosphate. Its function is as follows. Catalyzes the attachment of glutamate to tRNA(Glu) in a two-step reaction: glutamate is first activated by ATP to form Glu-AMP and then transferred to the acceptor end of tRNA(Glu). The sequence is that of Glutamate--tRNA ligase from Mycobacteroides abscessus (strain ATCC 19977 / DSM 44196 / CCUG 20993 / CIP 104536 / JCM 13569 / NCTC 13031 / TMC 1543 / L948) (Mycobacterium abscessus).